A 221-amino-acid chain; its full sequence is Enolase-phosphatase E1 (221 aa).

It belongs to the HAD-like hydrolase superfamily. MasA/MtnC family. Monomer. Mg(2+) serves as cofactor.

The catalysed reaction is 5-methylsulfanyl-2,3-dioxopentyl phosphate + H2O = 1,2-dihydroxy-5-(methylsulfanyl)pent-1-en-3-one + phosphate. It functions in the pathway amino-acid biosynthesis; L-methionine biosynthesis via salvage pathway; L-methionine from S-methyl-5-thio-alpha-D-ribose 1-phosphate: step 3/6. It participates in amino-acid biosynthesis; L-methionine biosynthesis via salvage pathway; L-methionine from S-methyl-5-thio-alpha-D-ribose 1-phosphate: step 4/6. Bifunctional enzyme that catalyzes the enolization of 2,3-diketo-5-methylthiopentyl-1-phosphate (DK-MTP-1-P) into the intermediate 2-hydroxy-3-keto-5-methylthiopentenyl-1-phosphate (HK-MTPenyl-1-P), which is then dephosphorylated to form the acireductone 1,2-dihydroxy-3-keto-5-methylthiopentene (DHK-MTPene). In Hydrogenobaculum sp. (strain Y04AAS1), this protein is Enolase-phosphatase E1.